Here is a 280-residue protein sequence, read N- to C-terminus: Pantothenate synthetase (280 aa).

Residue 26-33 coordinates ATP; it reads MGNLHEGH. H33 serves as the catalytic Proton donor. Q57 provides a ligand contact to (R)-pantoate. Q57 contacts beta-alanine. ATP is bound at residue 145–148; the sequence is GKKD. Q151 contributes to the (R)-pantoate binding site. ATP contacts are provided by residues V174 and 182–185; that span reads LSSR.

It belongs to the pantothenate synthetase family. As to quaternary structure, homodimer.

The protein resides in the cytoplasm. It carries out the reaction (R)-pantoate + beta-alanine + ATP = (R)-pantothenate + AMP + diphosphate + H(+). It participates in cofactor biosynthesis; (R)-pantothenate biosynthesis; (R)-pantothenate from (R)-pantoate and beta-alanine: step 1/1. Its function is as follows. Catalyzes the condensation of pantoate with beta-alanine in an ATP-dependent reaction via a pantoyl-adenylate intermediate. The chain is Pantothenate synthetase from Bordetella bronchiseptica (strain ATCC BAA-588 / NCTC 13252 / RB50) (Alcaligenes bronchisepticus).